The chain runs to 314 residues: Probable manganese-dependent inorganic pyrophosphatase (314 aa).

Mn(2+)-binding residues include histidine 7, aspartate 11, aspartate 13, aspartate 72, histidine 94, and aspartate 146.

This sequence belongs to the PPase class C family. Requires Mn(2+) as cofactor.

The protein localises to the cytoplasm. The enzyme catalyses diphosphate + H2O = 2 phosphate + H(+). In Deinococcus radiodurans (strain ATCC 13939 / DSM 20539 / JCM 16871 / CCUG 27074 / LMG 4051 / NBRC 15346 / NCIMB 9279 / VKM B-1422 / R1), this protein is Probable manganese-dependent inorganic pyrophosphatase (ppaC).